The chain runs to 144 residues: UPF0102 protein BMA2801 (144 aa).

Residues 1–28 are disordered; the sequence is MCHAREASPGTGEPEAAPRDNFPRAAGS.

This sequence belongs to the UPF0102 family.

The protein is UPF0102 protein BMA2801 of Burkholderia mallei (strain ATCC 23344).